Consider the following 429-residue polypeptide: Adenylosuccinate synthetase (429 aa).

Residues 12 to 18 (GDEGKGK) and 40 to 42 (GHT) each bind GTP. The active-site Proton acceptor is D13. Positions 13 and 40 each coordinate Mg(2+). IMP contacts are provided by residues 13-16 (DEGK), 38-41 (NAGH), T130, R144, Q225, T240, and R304. H41 serves as the catalytic Proton donor. 300–306 (ATTGRPR) is a binding site for substrate. GTP-binding positions include R306, 332-334 (KLD), and 414-416 (SVG).

This sequence belongs to the adenylosuccinate synthetase family. As to quaternary structure, homodimer. Requires Mg(2+) as cofactor.

It is found in the cytoplasm. It carries out the reaction IMP + L-aspartate + GTP = N(6)-(1,2-dicarboxyethyl)-AMP + GDP + phosphate + 2 H(+). It participates in purine metabolism; AMP biosynthesis via de novo pathway; AMP from IMP: step 1/2. Functionally, plays an important role in the de novo pathway of purine nucleotide biosynthesis. Catalyzes the first committed step in the biosynthesis of AMP from IMP. The polypeptide is Adenylosuccinate synthetase (Syntrophobacter fumaroxidans (strain DSM 10017 / MPOB)).